Consider the following 241-residue polypeptide: LexA repressor (241 aa).

Positions 26–46 (FDEMKTALDLRSKSGIHRLIT) form a DNA-binding region, H-T-H motif. Catalysis depends on for autocatalytic cleavage activity residues S162 and K200.

The protein belongs to the peptidase S24 family. In terms of assembly, homodimer.

It carries out the reaction Hydrolysis of Ala-|-Gly bond in repressor LexA.. Functionally, represses a number of genes involved in the response to DNA damage (SOS response), including recA and lexA. In the presence of single-stranded DNA, RecA interacts with LexA causing an autocatalytic cleavage which disrupts the DNA-binding part of LexA, leading to derepression of the SOS regulon and eventually DNA repair. The protein is LexA repressor of Ruegeria sp. (strain TM1040) (Silicibacter sp.).